The primary structure comprises 116 residues: MTEQADAAMPIQFTDAAAAKVKGLLEEEQNPALKLRVYVTGGGCSGFQYGFTFDEKVNEGDFTVEKQGVQLVVDPMSLQYLVGGEVDYTSGLEGSRFFVKNPNATTTCGCGASFSV.

3 residues coordinate iron-sulfur cluster: C44, C108, and C110.

Belongs to the HesB/IscA family. In terms of assembly, homodimer. Iron-sulfur cluster is required as a cofactor.

Its function is as follows. Required for insertion of 4Fe-4S clusters for at least IspG. The chain is Iron-sulfur cluster insertion protein ErpA from Shewanella putrefaciens (strain CN-32 / ATCC BAA-453).